Reading from the N-terminus, the 264-residue chain is Thymidylate synthase (264 aa).

Residue Arg-21 participates in dUMP binding. His-51 provides a ligand contact to (6R)-5,10-methylene-5,6,7,8-tetrahydrofolate. 126-127 (RR) lines the dUMP pocket. The Nucleophile role is filled by Cys-146. Residues 166-169 (RSCD), Asn-177, and 207-209 (HLY) each bind dUMP. Residue Asp-169 coordinates (6R)-5,10-methylene-5,6,7,8-tetrahydrofolate. Ala-263 is a binding site for (6R)-5,10-methylene-5,6,7,8-tetrahydrofolate.

Belongs to the thymidylate synthase family. Bacterial-type ThyA subfamily. Homodimer.

The protein resides in the cytoplasm. The enzyme catalyses dUMP + (6R)-5,10-methylene-5,6,7,8-tetrahydrofolate = 7,8-dihydrofolate + dTMP. It participates in pyrimidine metabolism; dTTP biosynthesis. Its function is as follows. Catalyzes the reductive methylation of 2'-deoxyuridine-5'-monophosphate (dUMP) to 2'-deoxythymidine-5'-monophosphate (dTMP) while utilizing 5,10-methylenetetrahydrofolate (mTHF) as the methyl donor and reductant in the reaction, yielding dihydrofolate (DHF) as a by-product. This enzymatic reaction provides an intracellular de novo source of dTMP, an essential precursor for DNA biosynthesis. This Citrobacter koseri (strain ATCC BAA-895 / CDC 4225-83 / SGSC4696) protein is Thymidylate synthase.